Here is a 449-residue protein sequence, read N- to C-terminus: Ribosomal protein uS12 methylthiotransferase RimO (449 aa).

Residues 7-123 enclose the MTTase N-terminal domain; the sequence is QKVSMVSLGC…VAEILAEHHA (117 aa). [4Fe-4S] cluster contacts are provided by Cys-16, Cys-52, Cys-86, Cys-161, Cys-165, and Cys-168. The Radical SAM core domain occupies 147–377; it reads SSPGWYAYLK…MKTQARVSFR (231 aa). Positions 380–448 constitute a TRAM domain; the sequence is RAMVGQTEQV…DYDLVAEMIE (69 aa).

This sequence belongs to the methylthiotransferase family. RimO subfamily. Requires [4Fe-4S] cluster as cofactor.

It localises to the cytoplasm. It catalyses the reaction L-aspartate(89)-[ribosomal protein uS12]-hydrogen + (sulfur carrier)-SH + AH2 + 2 S-adenosyl-L-methionine = 3-methylsulfanyl-L-aspartate(89)-[ribosomal protein uS12]-hydrogen + (sulfur carrier)-H + 5'-deoxyadenosine + L-methionine + A + S-adenosyl-L-homocysteine + 2 H(+). Its function is as follows. Catalyzes the methylthiolation of an aspartic acid residue of ribosomal protein uS12. The protein is Ribosomal protein uS12 methylthiotransferase RimO of Trichlorobacter lovleyi (strain ATCC BAA-1151 / DSM 17278 / SZ) (Geobacter lovleyi).